A 210-amino-acid polypeptide reads, in one-letter code: GTP pyrophosphokinase YwaC (210 aa).

This sequence belongs to the RelA/SpoT family. In terms of assembly, homotetramer.

It catalyses the reaction GTP + ATP = guanosine 3'-diphosphate 5'-triphosphate + AMP. Its pathway is purine metabolism; ppGpp biosynthesis; ppGpp from GTP: step 1/2. Functionally, functions as a (p)ppGpp synthase; GDP can be used instead of GTP, resulting in an increase of (p)ppGpp synthesis. Overexpression in relA mutants (triple relA-yjbM-ywaC deletions and single relA deletions) leads to growth arrest; GTP levels fall drastically, various guanine-related nucleotides are synthesized (ppGp or pGpp), the cellular transcriptional profile changes dramatically and 70S ribosome dimerization occurs. Overexpression in the presence of a wild-type relA gene does not have these effects. In eubacteria ppGpp (guanosine 3'-diphosphate 5'-diphosphate) is a mediator of the stringent response that coordinates a variety of cellular activities in response to changes in nutritional abundance. activities in response to changes in nutritional abundance. YwaC has probably a minor role in stringent response. This Bacillus subtilis (strain 168) protein is GTP pyrophosphokinase YwaC (ywaC).